A 131-amino-acid chain; its full sequence is NADPH-dependent 7-cyano-7-deazaguanine reductase (131 aa).

The active-site Thioimide intermediate is cysteine 41. The active-site Proton donor is aspartate 48. Substrate is bound by residues valine 63–leucine 65 and histidine 82–glutamate 83.

Belongs to the GTP cyclohydrolase I family. QueF type 1 subfamily.

The protein localises to the cytoplasm. It catalyses the reaction 7-aminomethyl-7-carbaguanine + 2 NADP(+) = 7-cyano-7-deazaguanine + 2 NADPH + 3 H(+). It participates in tRNA modification; tRNA-queuosine biosynthesis. Its function is as follows. Catalyzes the NADPH-dependent reduction of 7-cyano-7-deazaguanine (preQ0) to 7-aminomethyl-7-deazaguanine (preQ1). The polypeptide is NADPH-dependent 7-cyano-7-deazaguanine reductase (Nitratiruptor sp. (strain SB155-2)).